Reading from the N-terminus, the 281-residue chain is MIENRRGLDIFSHVMLIVGILAVLFPLYVGFVAATLDNQEVFQAPMTLIPGSHLWGNLRDIWLHGAGNNTTPFGLMLLNSFVMALAITVGKITVSILSAYAIVYFRFPLRNLFFWMIFLTLMLPVEVRIFPTVEVIARLDMMDSYTGLTLPLMASATATFLFRQFFMTLPDELMEAARIDGASPMRFFFDMVLPLSKTNLAALFVITFIYGWNQYLWPLLIVSDANLGTAVAGIKSMIASGDGATQWNQVMAAMLLTMLPPLLVVLLMQRWFVRGLVDSEK.

Helical transmembrane passes span 14-34 (VMLI…FVAA), 85-105 (LAIT…IVYF), 113-133 (FFWM…FPTV), 142-162 (MDSY…TFLF), 188-210 (FFDM…TFIY), and 247-267 (WNQV…VVLL). One can recognise an ABC transmembrane type-1 domain in the interval 77–268 (LLNSFVMALA…LPPLLVVLLM (192 aa)).

The protein belongs to the binding-protein-dependent transport system permease family. UgpAE subfamily. As to quaternary structure, the complex is composed of two ATP-binding proteins (UgpC), two transmembrane proteins (UgpA and UgpE) and a solute-binding protein (UgpB).

The protein localises to the cell inner membrane. Its function is as follows. Part of the ABC transporter complex UgpBAEC involved in sn-glycerol-3-phosphate (G3P) import. Probably responsible for the translocation of the substrate across the membrane. The chain is sn-glycerol-3-phosphate transport system permease protein UgpE (ugpE) from Pectobacterium atrosepticum (strain SCRI 1043 / ATCC BAA-672) (Erwinia carotovora subsp. atroseptica).